A 206-amino-acid polypeptide reads, in one-letter code: MARGKFITFEGIDGAGKTTHLQWFCDRLQERLGPAGRHVVVTREPGGTRLGETLREILLNQPMDLETEALLMFAGRREHLALVIEPALARGDWVVSDRFTDATFAYQGGGRGLPRDKLEALERWVQGGFQPDLTVLFDVPPQIASARRGAVRMPDKFESESDAFFARTRAEYLRRAQEAPHRFVIVDSSEPIAQIRKQLEGVLAAL.

11 to 18 is an ATP binding site; sequence GIDGAGKT.

It belongs to the thymidylate kinase family.

The enzyme catalyses dTMP + ATP = dTDP + ADP. Phosphorylation of dTMP to form dTDP in both de novo and salvage pathways of dTTP synthesis. The protein is Thymidylate kinase of Burkholderia thailandensis (strain ATCC 700388 / DSM 13276 / CCUG 48851 / CIP 106301 / E264).